Here is a 247-residue protein sequence, read N- to C-terminus: ATP synthase subunit a, chloroplastic (247 aa).

The next 5 helical transmembrane spans lie at 38–58, 95–115, 134–154, 199–219, and 220–240; these read QVLI…IIAV, VPFI…GALL, INTT…AGLS, LVVV…VMFL, and GLFT…AYIG.

The protein belongs to the ATPase A chain family. In terms of assembly, F-type ATPases have 2 components, CF(1) - the catalytic core - and CF(0) - the membrane proton channel. CF(1) has five subunits: alpha(3), beta(3), gamma(1), delta(1), epsilon(1). CF(0) has four main subunits: a, b, b' and c.

It localises to the plastid. The protein resides in the chloroplast thylakoid membrane. Key component of the proton channel; it plays a direct role in the translocation of protons across the membrane. The sequence is that of ATP synthase subunit a, chloroplastic from Zea mays (Maize).